A 738-amino-acid polypeptide reads, in one-letter code: MAPWLQLCSFFFTVNACLNGSQLAVAAGGSGRARGADTCGWRGVGPASRNSGLHNITFRYDNCTTYLNPGGKHAIADAQNITISQYACHDQVAVTILWSPGALGIEFLKGFRVILEELKSEGRQCQQLILKDPKQLNSSFRRTGMESQPFLNMKFETDYFVKIVPFPSIKNESNYHPFFFRTRACDLLLQPDNLACKPFWKPRNLNISQHGSDMHVSFDHAPQNFGFRGFHVLYKLKHEGPFRRRTCRQDQNTETTSCLLQNVSPGDYIIELVDDSNTTRKAAQYVVKSVQSPWAGPIRAVAITVPLVVISAFATLFTVMCRKKQQENIYSHLDEESPESSTYAAALPRDRLRPQPKVFLCYSNKDGQNHMNVVQCFAYFLQDFCGCEVALDLWEDFSLCREGQREWAIQKIHESQFIIVVCSKGMKYFVDKKNFRHKGGSRGEAQGEFFLVAVAAIAEKLRQAKQSSSAALRKFIAVYFDYSCEGDVPCSLDLSTKYKLMDHLPELCAHLHSGEQEVLGQHPGHSSRRNYFRSKSGRSLYVAICNMHQFIDEEPDWFEKQFIPFQHPPVRYQEPVLEKFDSGLVLNDVISKPGPESDFCRKVEACVLGAAGPADSYSYLESQHVGLDQDTEAQPSCDSAPALQPLLHAVKAGSPSEMPRDSGIYDSSVPSSELSLPLMEGLSPDQIETSSLTESVSSSSGLGEEDPPTLPSKLLASGVSREHGCHSHTDELQALAPL.

Positions 1-16 (MAPWLQLCSFFFTVNA) are cleaved as a signal peptide. Topologically, residues 17–299 (CLNGSQLAVA…VQSPWAGPIR (283 aa)) are extracellular. N-linked (GlcNAc...) asparagine glycosylation is found at N19, N55, N62, N80, N137, N171, N206, and N277. The chain crosses the membrane as a helical span at residues 300-320 (AVAITVPLVVISAFATLFTVM). The Cytoplasmic portion of the chain corresponds to 321–738 (CRKKQQENIY…TDELQALAPL (418 aa)). The 155-residue stretch at 355 to 509 (QPKVFLCYSN…LMDHLPELCA (155 aa)) folds into the SEFIR domain. The tract at residues 653-738 (GSPSEMPRDS…TDELQALAPL (86 aa)) is disordered. Low complexity predominate over residues 667–702 (SSVPSSELSLPLMEGLSPDQIETSSLTESVSSSSGL). Positions 720–731 (SREHGCHSHTDE) are enriched in basic and acidic residues.

As to quaternary structure, self-associates. Interacts with FGFR2 and phosphorylated MAP2K1 or MAP2K2. Associates with a MAP2K1/2-MAPK1/3 complex. Interacts with FGFR1 and MAP3K7.

Its subcellular location is the golgi apparatus membrane. It localises to the cell membrane. Its function is as follows. Feedback inhibitor of fibroblast growth factor mediated Ras-MAPK signaling and ERK activation. Regulates the nuclear ERK signaling pathway by spatially blocking nuclear translocation of activated ERK. Mediates JNK activation and may be involved in apoptosis. May inhibit FGF-induced FGFR1 tyrosine phosphorylation. Might have a role in the early stages of fate specification of GnRH-secreting neurons. Inhibits TGFB-induced epithelial-to-mesenchymal transition in lens epithelial cells. The protein is Interleukin-17 receptor D (Il17rd) of Mus musculus (Mouse).